The chain runs to 211 residues: FMN-dependent NADH:quinone oxidoreductase 3 (211 aa).

102–105 (MWNF) contacts FMN.

This sequence belongs to the azoreductase type 1 family. In terms of assembly, homodimer. It depends on FMN as a cofactor.

The catalysed reaction is 2 a quinone + NADH + H(+) = 2 a 1,4-benzosemiquinone + NAD(+). It catalyses the reaction N,N-dimethyl-1,4-phenylenediamine + anthranilate + 2 NAD(+) = 2-(4-dimethylaminophenyl)diazenylbenzoate + 2 NADH + 2 H(+). In terms of biological role, quinone reductase that provides resistance to thiol-specific stress caused by electrophilic quinones. Its function is as follows. Also exhibits azoreductase activity. Catalyzes the reductive cleavage of the azo bond in aromatic azo compounds to the corresponding amines. The polypeptide is FMN-dependent NADH:quinone oxidoreductase 3 (Bacillus cereus (strain ZK / E33L)).